The sequence spans 471 residues: Tryptophanase (471 aa).

3 positions are modified to N6-acetyllysine: K5, K115, and K156. At K270 the chain carries N6-(pyridoxal phosphate)lysine. N6-acetyllysine is present on K450.

This sequence belongs to the beta-eliminating lyase family. Homotetramer. Requires pyridoxal 5'-phosphate as cofactor.

It carries out the reaction L-tryptophan + H2O = indole + pyruvate + NH4(+). It functions in the pathway amino-acid degradation; L-tryptophan degradation via pyruvate pathway; indole and pyruvate from L-tryptophan: step 1/1. The protein is Tryptophanase (tnaA) of Escherichia coli O157:H7.